We begin with the raw amino-acid sequence, 187 residues long: Shikimate kinase (187 aa).

Gly-18 to Thr-23 serves as a coordination point for ATP. Residue Ser-22 coordinates Mg(2+). Substrate-binding residues include Asp-40, Arg-64, and Gly-86. Position 128 (Arg-128) interacts with ATP. Arg-147 contacts substrate. Arg-164 serves as a coordination point for ATP.

Belongs to the shikimate kinase family. Monomer. Mg(2+) is required as a cofactor.

The protein localises to the cytoplasm. The catalysed reaction is shikimate + ATP = 3-phosphoshikimate + ADP + H(+). Its pathway is metabolic intermediate biosynthesis; chorismate biosynthesis; chorismate from D-erythrose 4-phosphate and phosphoenolpyruvate: step 5/7. Catalyzes the specific phosphorylation of the 3-hydroxyl group of shikimic acid using ATP as a cosubstrate. This chain is Shikimate kinase, found in Rhodopirellula baltica (strain DSM 10527 / NCIMB 13988 / SH1).